A 31-amino-acid polypeptide reads, in one-letter code: GMSGYIQGIPDFLKGYLHGISAANKHKKGRL.

Its function is as follows. Antibacterial activity against several lactic acid bacteria, Listeria, Streptococci, etc. This chain is Bacteriocin lactocin-705, found in Lacticaseibacillus paracasei (Lactobacillus paracasei).